A 295-amino-acid polypeptide reads, in one-letter code: Elongation factor Ts (295 aa).

An involved in Mg(2+) ion dislocation from EF-Tu region spans residues 79–82 (TDFV).

It belongs to the EF-Ts family.

It localises to the cytoplasm. In terms of biological role, associates with the EF-Tu.GDP complex and induces the exchange of GDP to GTP. It remains bound to the aminoacyl-tRNA.EF-Tu.GTP complex up to the GTP hydrolysis stage on the ribosome. In Bacillus anthracis (strain A0248), this protein is Elongation factor Ts.